The sequence spans 93 residues: NAD(P)H-quinone oxidoreductase subunit 4L, chloroplastic (93 aa).

2 helical membrane-spanning segments follow: residues 1-21 (MLEHALIAGAFSFCIGISGLI) and 60-80 (IFAIFVIAIAAAEAAIGLSIA).

This sequence belongs to the complex I subunit 4L family. In terms of assembly, NDH is composed of at least 16 different subunits, 5 of which are encoded in the nucleus.

It localises to the plastid. The protein localises to the chloroplast thylakoid membrane. It carries out the reaction a plastoquinone + NADH + (n+1) H(+)(in) = a plastoquinol + NAD(+) + n H(+)(out). The catalysed reaction is a plastoquinone + NADPH + (n+1) H(+)(in) = a plastoquinol + NADP(+) + n H(+)(out). In terms of biological role, NDH shuttles electrons from NAD(P)H:plastoquinone, via FMN and iron-sulfur (Fe-S) centers, to quinones in the photosynthetic chain and possibly in a chloroplast respiratory chain. The immediate electron acceptor for the enzyme in this species is believed to be plastoquinone. Couples the redox reaction to proton translocation, and thus conserves the redox energy in a proton gradient. This chain is NAD(P)H-quinone oxidoreductase subunit 4L, chloroplastic, found in Anthoceros angustus (Hornwort).